Reading from the N-terminus, the 243-residue chain is MPHSKHRDYTADKQDIPYTELKACKSPWKHRTPAVKQSPVVLSEEQLKYAELTFHRTPQLQPRKQTVRRKRQGPKSAVWRVVTCVLGVLCVVLMITMGILVPKLFSGQEEQYRETSLHHLLKNDSSCDPCSHDWIAFGNNFYLFFRGTKSWAESKSACEELNSHLLDIDSKAELENLLLFEINGWILVKKNQTNWSSSENETKLQHTLIDEKKNHSCRYLRGSQFIADDCSSKKPYACEFNKM.

Residues 1 to 80 (MPHSKHRDYT…RQGPKSAVWR (80 aa)) are Cytoplasmic-facing. 2 short sequence motifs (ITIM motif) span residues 16–21 (IPYTEL) and 47–52 (LKYAEL). Residues 81–101 (VVTCVLGVLCVVLMITMGILV) traverse the membrane as a helical; Signal-anchor for type II membrane protein segment. The Extracellular portion of the chain corresponds to 102-243 (PKLFSGQEEQ…KPYACEFNKM (142 aa)). Asn123, Asn191, Asn194, Asn200, and Asn214 each carry an N-linked (GlcNAc...) asparagine glycan. The region spanning 137–239 (FGNNFYLFFR…CSSKKPYACE (103 aa)) is the C-type lectin domain. 2 disulfide bridges follow: Cys158–Cys238 and Cys217–Cys230.

As to quaternary structure, heterodimer with KLRE1. Interacts with PTPN6. As to expression, expressed in natural killer (NK) cells.

It localises to the cell membrane. Its function is as follows. Lectin-like receptor for natural killer (NK) cells. Heterodimer formation with KLRE1 mediates inhibition of NK cell cytolytic activity. The chain is Killer cell lectin-like receptor subfamily I member 1 from Rattus norvegicus (Rat).